The sequence spans 523 residues: Nuclear receptor ROR-alpha (523 aa).

A compositionally biased stretch (low complexity) spans 1-26; sequence MESAPAAPDPAASEPGSSGADAAAGS. The tract at residues 1–63 is disordered; it reads MESAPAAPDP…SRGISVTKKT (63 aa). Lys-38 bears the N6-methyllysine mark. A compositionally biased stretch (polar residues) spans 48 to 57; sequence QSYSSTSRGI. NR C4-type zinc fingers lie at residues 73 to 93 and 109 to 133; these read CKIC…CEGC and CPRQ…LQKC. Positions 73-138 form a DNA-binding region, nuclear receptor; the sequence is CKICGDKSSG…RLQKCLAVGM (66 aa). Residues 154–183 are disordered; the sequence is DSLYAEVQKHRMQQQQRDHQQQPGEAEPLT. Thr-183 is subject to Phosphothreonine; by MAPK1. Lys-240 is covalently cross-linked (Glycyl lysine isopeptide (Lys-Gly) (interchain with G-Cter in SUMO)). An NR LBD domain is found at 272-510; it reads ELEHLAQNIS…LHFPPLYKEL (239 aa). The AF-2 signature appears at 506-523; the sequence is LYKELFTSEFEPAMQIDG.

Belongs to the nuclear hormone receptor family. NR1 subfamily. In terms of assembly, monomer. Interacts (via the DNA-binding domain) with HIF1A; the interaction enhances HIF1A transcription under hypoxia through increasing protein stability. Interacts with CEBPB; the interaction disrupts the interaction CEBPB:EP300. Interacts with the coactivators NCOA2, PPARGC1A (via LXXLL motif), EP300 and MED1. Interacts with the corepressor NCOR1. Interacts with MAGED1 and CTNNB1. Interacts with CRY1 and PER2. Interacts (via AF-2 motif) with PROX1. Interacts with NRIP1. Isoform 4 interacts (via AF-2 motif) with isoform 1 of FOXP3 (via LXXLL motif). Phosphorylation by conventional PKCs in neurons inhibits transcriptional activity. Phosphorylated on Thr-183 by MAPK1/ERK1 in vitro. In terms of processing, sumoylated by SENP1 and SENP2. Sumoylation, promoted by PIAS2, PIAS3, PIAS4 but not PIAS1, enhances the transcriptional activity. Desumoylated by SENP1. Post-translationally, ubiquitinated, leading to its degradation by the proteasome. Proteasomal degradation is required for efficient transcriptional activity and is prevented by HR. Monomethylated at Lys-38 by EZH2, this creates a degron recognized by a DCX (DDB1-DCAF1/VPRBP-CUL4A-RBX1) E3 ubiquitin ligase complex. As to expression, widely expressed in a number of tissues. Expressed in both regulatory T-cells (Treg) and effector T-cells (Teff). Isoform 4: Highly expressed in the central nervous system, including in the cerebellum.

It localises to the nucleus. Its function is as follows. Nuclear receptor that binds DNA as a monomer to ROR response elements (RORE) containing a single core motif half-site 5'-AGGTCA-3' preceded by a short A-T-rich sequence. Key regulator of embryonic development, cellular differentiation, immunity, circadian rhythm as well as lipid, steroid, xenobiotics and glucose metabolism. Considered to have intrinsic transcriptional activity, have some natural ligands like oxysterols that act as agonists (25-hydroxycholesterol) or inverse agonists (7-oxygenated sterols), enhancing or repressing the transcriptional activity, respectively. Recruits distinct combinations of cofactors to target genes regulatory regions to modulate their transcriptional expression, depending on the tissue, time and promoter contexts. Regulates genes involved in photoreceptor development including OPN1SW, OPN1SM and ARR3 and skeletal muscle development with MYOD1. Required for proper cerebellum development. Regulates SHH gene expression, among others, to induce granule cells proliferation as well as expression of genes involved in calcium-mediated signal transduction. Regulates the circadian expression of several clock genes, including CLOCK, BMAL1, NPAS2 and CRY1. Competes with NR1D1 for binding to their shared DNA response element on some clock genes such as BMAL1, CRY1 and NR1D1 itself, resulting in NR1D1-mediated repression or RORA-mediated activation of clock genes expression, leading to the circadian pattern of clock genes expression. Therefore influences the period length and stability of the clock. Regulates genes involved in lipid metabolism such as apolipoproteins APOA1, APOA5, APOC3 and PPARG. In liver, has specific and redundant functions with RORC as positive or negative modulator of expression of genes encoding phase I and phase II proteins involved in the metabolism of lipids, steroids and xenobiotics, such as CYP7B1 and SULT2A1. Induces a rhythmic expression of some of these genes. In addition, interplays functionally with NR1H2 and NR1H3 for the regulation of genes involved in cholesterol metabolism. Also involved in the regulation of hepatic glucose metabolism through the modulation of G6PC1 and PCK1. In adipose tissue, plays a role as negative regulator of adipocyte differentiation, probably acting through dual mechanisms. May suppress CEBPB-dependent adipogenesis through direct interaction and PPARG-dependent adipogenesis through competition for DNA-binding. Downstream of IL6 and TGFB and synergistically with RORC isoform 2, is implicated in the lineage specification of uncommitted CD4(+) T-helper (T(H)) cells into T(H)17 cells, antagonizing the T(H)1 program. Probably regulates IL17 and IL17F expression on T(H) by binding to the essential enhancer conserved non-coding sequence 2 (CNS2) in the IL17-IL17F locus. Involved in hypoxia signaling by interacting with and activating the transcriptional activity of HIF1A. May inhibit cell growth in response to cellular stress. May exert an anti-inflammatory role by inducing CHUK expression and inhibiting NF-kappa-B signaling. The protein is Nuclear receptor ROR-alpha (RORA) of Homo sapiens (Human).